The chain runs to 585 residues: Proline--tRNA ligase (585 aa).

This sequence belongs to the class-II aminoacyl-tRNA synthetase family. ProS type 1 subfamily. In terms of assembly, homodimer.

It is found in the cytoplasm. It catalyses the reaction tRNA(Pro) + L-proline + ATP = L-prolyl-tRNA(Pro) + AMP + diphosphate. Its function is as follows. Catalyzes the attachment of proline to tRNA(Pro) in a two-step reaction: proline is first activated by ATP to form Pro-AMP and then transferred to the acceptor end of tRNA(Pro). As ProRS can inadvertently accommodate and process non-cognate amino acids such as alanine and cysteine, to avoid such errors it has two additional distinct editing activities against alanine. One activity is designated as 'pretransfer' editing and involves the tRNA(Pro)-independent hydrolysis of activated Ala-AMP. The other activity is designated 'posttransfer' editing and involves deacylation of mischarged Ala-tRNA(Pro). The misacylated Cys-tRNA(Pro) is not edited by ProRS. The polypeptide is Proline--tRNA ligase (Acidobacterium capsulatum (strain ATCC 51196 / DSM 11244 / BCRC 80197 / JCM 7670 / NBRC 15755 / NCIMB 13165 / 161)).